The primary structure comprises 274 residues: F-actin-capping protein subunit alpha (274 aa).

This sequence belongs to the F-actin-capping protein alpha subunit family. Heterodimer of an alpha and a beta subunit.

The protein localises to the cytoplasm. In terms of biological role, F-actin-capping proteins bind in a Ca(2+)-independent manner to the fast growing ends of actin filaments (barbed end) thereby blocking the exchange of subunits at these ends. Unlike other capping proteins (such as gelsolin and severin), these proteins do not sever actin filaments. This Chaetomium thermophilum (strain DSM 1495 / CBS 144.50 / IMI 039719) (Thermochaetoides thermophila) protein is F-actin-capping protein subunit alpha.